Reading from the N-terminus, the 425-residue chain is Histone-binding protein RBBP7 (425 aa).

N-acetylalanine is present on Ala2. Ser3 bears the Phosphoserine mark. Residue Lys4 is modified to N6-acetyllysine; alternate. Lys4 is covalently cross-linked (Glycyl lysine isopeptide (Lys-Gly) (interchain with G-Cter in SUMO2); alternate). A Glycyl lysine isopeptide (Lys-Gly) (interchain with G-Cter in ubiquitin); alternate cross-link involves residue Lys4. A Phosphothreonine modification is found at Thr10. WD repeat units lie at residues 47–122 (QWLP…KINH), 128–173 (RARY…LRLR), 181–217 (GLSW…KIVD), 228–269 (VVED…HLVD), 275–312 (VNCL…LHTF), 318–369 (EIFQ…LFIH), and 376–403 (ISDF…IWQM). Ser95 bears the Phosphoserine mark. Residue Lys101 forms a Glycyl lysine isopeptide (Lys-Gly) (interchain with G-Cter in SUMO2) linkage. Residue Lys119 is modified to N6-acetyllysine. Lys155 participates in a covalent cross-link: Glycyl lysine isopeptide (Lys-Gly) (interchain with G-Cter in SUMO2). N6-acetyllysine; alternate is present on Lys159. A Glycyl lysine isopeptide (Lys-Gly) (interchain with G-Cter in SUMO2); alternate cross-link involves residue Lys159. Ser354 carries the phosphoserine modification.

Belongs to the WD repeat RBAP46/RBAP48/MSI1 family. Binds directly to helix 1 of the histone fold of histone H4, a region that is not accessible when H4 is in chromatin. Subunit of the type B histone acetyltransferase (HAT) complex, composed of RBBP7 and HAT1. Subunit of the core histone deacetylase (HDAC) complex, which is composed of HDAC1, HDAC2, RBBP4 and RBBP7. The core HDAC complex associates with SIN3A, ARID4B/SAP180, SAP18, SAP30, SAP130, SUDS3/SAP45 and possibly ARID4A/RBP1 and ING1 to form the SIN3 HDAC complex. Component of the nucleosome remodeling and deacetylase (NuRD) repressor complex, composed of core proteins MTA1, MTA2, MTA3, RBBP4, RBBP7, HDAC1, HDAC2, MBD2, MBD3, and peripherally associated proteins CDK2AP1, CDK2AP2, GATAD2A, GATAD2B, CHD3, CHD4 and CHD5. The exact stoichiometry of the NuRD complex is unknown, and some subunits such as MBD2 and MBD3, GATAD2A and GATAD2B, and CHD3, CHD4 and CHD5 define mutually exclusive NuRD complexes. The NuRD complex may interact with MBD3L1. The NuRD complex may interact with MBD3L2. Subunit of the PRC2/EED-EZH2 complex, which is composed of at least EED, EZH2, RBBP4, RBBP7 and SUZ12. The PRC2/EED-EZH2 complex may also associate with HDAC1. Component of the NURF-1 ISWI chromatin remodeling complex (also called the nucleosome-remodeling factor (NURF) complex) at least composed of SMARCA1, BPTF, RBBP4 and RBBP7. Within the complex interacts with SMARCA1. Component of the BPFT-SMARCA1 complex at least composed of SMARCA1, BPFT, RBBP4 and RBBP7; the complex is catalytically inactive and does not remodel chromatin. Within the complex interacts with SMARCA1. Interacts with BRCA1. Interacts with CDK2AP1. Interacts with CENPA. Interacts with CHD3. Interacts with CHD4. Interacts with CREBBP, and this interaction may be enhanced by the binding of phosphorylated CREB1 to CREBBP. Interacts with HDAC7. Interacts with MTA1. Interacts with PWWP2B. Interacts with RB1 (via viral protein-binding domain). Interacts with SUV39H1.

It is found in the nucleus. Core histone-binding subunit that may target chromatin remodeling factors, histone acetyltransferases and histone deacetylases to their histone substrates in a manner that is regulated by nucleosomal DNA. Component of several complexes which regulate chromatin metabolism. These include the type B histone acetyltransferase (HAT) complex, which is required for chromatin assembly following DNA replication; the core histone deacetylase (HDAC) complex, which promotes histone deacetylation and consequent transcriptional repression; the nucleosome remodeling and histone deacetylase complex (the NuRD complex), which promotes transcriptional repression by histone deacetylation and nucleosome remodeling; and the PRC2/EED-EZH2 complex, which promotes repression of homeotic genes during development; and the NURF (nucleosome remodeling factor) complex. This is Histone-binding protein RBBP7 (RBBP7) from Bos taurus (Bovine).